The following is a 432-amino-acid chain: Polyadenylate-binding protein RBP47C (432 aa).

Residues 1 to 55 (MADVKIQSESESSDSHPVVDNQPPPPPPPPQQPAKEEENQPKTSPTPPPHWMRYP) are disordered. Over residues 22–32 (QPPPPPPPPQQ) the composition is skewed to pro residues. RRM domains lie at 101-183 (KTIW…WASF) and 197-276 (LSIF…PATP). Positions 271 to 293 (IGPATPRKTNGYQQQGGYMPNGT) are disordered. The segment covering 277 to 286 (RKTNGYQQQG) has biased composition (polar residues). The RRM 3 domain occupies 304 to 376 (TTIFVGGLDS…QTVRLSWGRN (73 aa)).

The protein belongs to the polyadenylate-binding RBP47 family. As to quaternary structure, interacts with the poly(A) tail of mRNA in nucleus. As to expression, expressed in leaves, stems, flowers, and seedlings.

The protein localises to the nucleus. It is found in the cytoplasmic granule. In terms of biological role, heterogeneous nuclear ribonucleoprotein (hnRNP)-protein binding the poly(A) tail of mRNA and probably involved in some steps of pre-mRNA maturation. The protein is Polyadenylate-binding protein RBP47C (RBP47C) of Arabidopsis thaliana (Mouse-ear cress).